Reading from the N-terminus, the 471-residue chain is Trigger factor (471 aa).

The 96-residue stretch at 169-264 (GDVAVVDFKG…LKEIKEKELP (96 aa)) folds into the PPIase FKBP-type domain. The interval 443–471 (SLASQESEITAPETEAETIEVTAESTTGE) is disordered. Low complexity predominate over residues 448 to 471 (ESEITAPETEAETIEVTAESTTGE).

It belongs to the FKBP-type PPIase family. Tig subfamily.

It localises to the cytoplasm. The enzyme catalyses [protein]-peptidylproline (omega=180) = [protein]-peptidylproline (omega=0). Its function is as follows. Involved in protein export. Acts as a chaperone by maintaining the newly synthesized protein in an open conformation. Functions as a peptidyl-prolyl cis-trans isomerase. This Trichormus variabilis (strain ATCC 29413 / PCC 7937) (Anabaena variabilis) protein is Trigger factor.